We begin with the raw amino-acid sequence, 456 residues long: Gamma-aminobutyric acid receptor subunit alpha-1 (456 aa).

The signal sequence occupies residues 1 to 27 (MRKSPGLSDCLWAWILLLSTLTGRSYG). The Extracellular portion of the chain corresponds to 28-253 (QPSLQDELKD…FHLKRKIGYF (226 aa)). An N-linked (GlcNAc...) asparagine glycan is attached at asparagine 38. Arginine 94 is a 4-aminobutanoate binding site. Asparagine 138 carries N-linked (GlcNAc...) asparagine glycosylation. Threonine 157 lines the 4-aminobutanoate pocket. A disulfide bridge links cysteine 166 with cysteine 180. Residues 254–274 (VIQTYLPCIMTVILSQVSFWL) traverse the membrane as a helical segment. Topologically, residues 275–279 (NRESV) are cytoplasmic. A helical transmembrane segment spans residues 280 to 301 (PARTVFGVTTVLTMTTLSISAR). Residues 302-311 (NSLPKVAYAT) are Extracellular-facing. The chain crosses the membrane as a helical span at residues 312-333 (AMDWFIAVCYAFVFSALIEFAT). Residues 334–421 (VNYFTKRGYA…TFNSVSKIDR (88 aa)) lie on the Cytoplasmic side of the membrane. A helical transmembrane segment spans residues 422 to 441 (LSRIAFPLLFGIFNLIYWAT). Topologically, residues 442–456 (YLNREPQLKAPTPHQ) are extracellular.

This sequence belongs to the ligand-gated ion channel (TC 1.A.9) family. Gamma-aminobutyric acid receptor (TC 1.A.9.5) subfamily. GABRA1 sub-subfamily. Heteropentamer, formed by a combination of alpha (GABRA1-6), beta (GABRB1-3), gamma (GABRG1-3), delta (GABRD), epsilon (GABRE), rho (GABRR1-3), pi (GABRP) and theta (GABRQ) subunits, each subunit exhibiting distinct physiological and pharmacological properties. Interacts with UBQLN1. Interacts with TRAK1. Interacts with KIF21B. Identified in a complex of 720 kDa composed of LHFPL4, NLGN2, GABRA1, GABRB2, GABRG2 and GABRB3. Interacts with LHFPL4. Interacts with NLGN2. Interacts with SHISA7; interaction leads to the regulation of GABA(A) receptor trafficking, channel deactivation kinetics and pharmacology.

It localises to the postsynaptic cell membrane. It is found in the cell membrane. Its subcellular location is the cytoplasmic vesicle membrane. It carries out the reaction chloride(in) = chloride(out). Allosterically activated by benzodiazepines, the neuroanesthetic alphaxalone and pentobarbital. Inhibited by the antagonist bicuculline. Potentiated by histamine. Its function is as follows. Alpha subunit of the heteropentameric ligand-gated chloride channel gated by gamma-aminobutyric acid (GABA), a major inhibitory neurotransmitter in the brain. GABA-gated chloride channels, also named GABA(A) receptors (GABAAR), consist of five subunits arranged around a central pore and contain GABA active binding site(s) located at the alpha and beta subunit interface(s). When activated by GABA, GABAARs selectively allow the flow of chloride anions across the cell membrane down their electrochemical gradient. Alpha-1/GABRA1-containing GABAARs are largely synaptic. Chloride influx into the postsynaptic neuron following GABAAR opening decreases the neuron ability to generate a new action potential, thereby reducing nerve transmission. GABAARs containing alpha-1 and beta-2 or -3 subunits exhibit synaptogenic activity; the gamma-2 subunit being necessary but not sufficient to induce rapid synaptic contacts formation. GABAARs function also as histamine receptor where histamine binds at the interface of two neighboring beta subunits and potentiates GABA response. GABAARs containing alpha, beta and epsilon subunits also permit spontaneous chloride channel activity while preserving the structural information required for GABA-gated openings. Alpha-1-mediated plasticity in the orbitofrontal cortex regulates context-dependent action selection. Together with rho subunits, may also control neuronal and glial GABAergic transmission in the cerebellum. The chain is Gamma-aminobutyric acid receptor subunit alpha-1 (GABRA1) from Pongo abelii (Sumatran orangutan).